The primary structure comprises 124 residues: Ribonuclease pancreatic (124 aa).

Positions 1–13 are enriched in basic and acidic residues; the sequence is KESAAAKFERQHM. A disordered region spans residues 1 to 24; sequence KESAAAKFERQHMDSSTSSASSSN. The substrate site is built by K7 and R10. H12 acts as the Proton acceptor in catalysis. Disulfide bonds link C26/C84, C40/C95, C58/C110, and C65/C72. N34 carries an N-linked (GlcNAc...) asparagine; partial glycan. Substrate-binding positions include 41-45, K66, and R85; that span reads KPVNT. H119 serves as the catalytic Proton donor.

The protein belongs to the pancreatic ribonuclease family. In terms of assembly, monomer. Interacts with and forms tight 1:1 complexes with RNH1. Dimerization of two such complexes may occur. Interaction with RNH1 inhibits this protein. As to expression, pancreas.

It localises to the secreted. The enzyme catalyses an [RNA] containing cytidine + H2O = an [RNA]-3'-cytidine-3'-phosphate + a 5'-hydroxy-ribonucleotide-3'-[RNA].. The catalysed reaction is an [RNA] containing uridine + H2O = an [RNA]-3'-uridine-3'-phosphate + a 5'-hydroxy-ribonucleotide-3'-[RNA].. Functionally, endonuclease that catalyzes the cleavage of RNA on the 3' side of pyrimidine nucleotides. Acts on single-stranded and double-stranded RNA. The chain is Ribonuclease pancreatic (RNASE1) from Ovis aries (Sheep).